The chain runs to 862 residues: Cell surface glycoprotein (862 aa).

An N-terminal signal peptide occupies residues 1–34; that stretch reads MTDTQQKIKAVLLTVLMVTSVFAATIAFSGAAAA. Disordered regions lie at residues 35–60, 101–126, and 200–220; these read SERG…SAGN, ILLE…EGTE, and VNTN…DRDD. Positions 43 to 57 are enriched in polar residues; it reads YTTGPTDGNQDNVDS. Positions 206-220 are enriched in basic and acidic residues; that stretch reads NDDHPNPAADGDRDD. Residues N442, N520, N550, N702, and N761 are each glycosylated (N-linked (GlcNAc...) asparagine). The segment at 752–838 is disordered; it reads LSDENVEPGN…TEEATTEATG (87 aa). Acidic residues predominate over residues 784 to 801; sequence SLEEEQPATDTPEPDTDT. Positions 802-815 are enriched in low complexity; it reads PEPATDTPEPATDT. The span at 816-833 shows a compositional bias: acidic residues; sequence PEPDTDTPEPDTETEEAT. Residues 838–858 form a helical membrane-spanning segment; the sequence is GPGFTAAIALIALVAAALLAV. The PGF sorting signal signature appears at 839-841; sequence PGF.

The protein belongs to the halobacterial S-layer protein family. In terms of processing, glycosylated. Cleaved by the archaeosortase ArtA at the C-terminus, with removal of a short hydrophobic segment. Post-translationally, lipidation.

It is found in the secreted. It localises to the cell wall. The protein resides in the S-layer. The protein localises to the cell membrane. Its function is as follows. S-layer protein. The S-layer is a paracrystalline mono-layered assembly of proteins which coat the surface of the cell. This Haloarcula japonica (strain ATCC 49778 / DSM 6131 / JCM 7785 / NBRC 101032 / NCIMB 13157 / TR-1) protein is Cell surface glycoprotein.